Reading from the N-terminus, the 270-residue chain is MNFGKKVWLIGNSSEKSKKTLNKLSKILKAEHFVFDDINPEIVISVGGDGTLLRAMHMYEYQLDRVRFLGVHTGHLGFYTDFTDEDLFEVVEALYDENPAQAIHYPLICVQVSFTDGYQIVRHVLNEATIRRASKTMVGDVRISDYLFERFRGDGLSISTPTGSTAYNKSIGGAVVHPRVKAMQIAEIASLNNVVYRTLGSPMIVAEKDTITVCPAPEDDYSLTFDQLTFEYKNIKSIEFSLDGTTISFANCAHTPFWERVSKSFIGEVE.

Residue D49 is the Proton acceptor of the active site. Residues 49 to 50 (DG), R54, 126 to 127 (NE), R152, D154, 165 to 170 (TAYNKS), A189, and Q227 each bind NAD(+).

This sequence belongs to the NAD kinase family. The cofactor is a divalent metal cation.

Its subcellular location is the cytoplasm. It carries out the reaction NAD(+) + ATP = ADP + NADP(+) + H(+). In terms of biological role, involved in the regulation of the intracellular balance of NAD and NADP, and is a key enzyme in the biosynthesis of NADP. Catalyzes specifically the phosphorylation on 2'-hydroxyl of the adenosine moiety of NAD to yield NADP. In Lactococcus lactis subsp. cremoris (strain MG1363), this protein is NAD kinase.